The following is a 29-amino-acid chain: Protein YldA (29 aa).

Residues 5–25 (FYILIGFLIMAAIIVMAVLYL) form a helical membrane-spanning segment.

Its subcellular location is the cell inner membrane. This is Protein YldA from Escherichia coli (strain K12).